Consider the following 368-residue polypeptide: Glutamate 5-kinase (368 aa).

Position 9 (K9) interacts with ATP. The substrate site is built by S49, D136, and N148. Residues 168–169 (TD) and 210–216 (TGGMMTK) each bind ATP. The region spanning 275-353 (AGIITIDDGA…ADIENVLGYE (79 aa)) is the PUA domain.

The protein belongs to the glutamate 5-kinase family.

The protein localises to the cytoplasm. It catalyses the reaction L-glutamate + ATP = L-glutamyl 5-phosphate + ADP. It functions in the pathway amino-acid biosynthesis; L-proline biosynthesis; L-glutamate 5-semialdehyde from L-glutamate: step 1/2. In terms of biological role, catalyzes the transfer of a phosphate group to glutamate to form L-glutamate 5-phosphate. This chain is Glutamate 5-kinase, found in Haemophilus influenzae (strain 86-028NP).